The chain runs to 233 residues: Tail needle protein gp26 (233 aa).

Residues 2–60 are interaction with tail hub protein gp10; sequence ADPSLNNPVVIQATRLDASILPRNVFSKSYLLYVIAQGTDVGAIAGKANEAGQGAYDAQ. 11 Trimerization heptad repeat repeats span residues 61–67, 70–76, 77–83, 84–90, 91–97, 98–104, 105–111, 112–118, 119–125, 126–132, and 133–139; these read VKNDEQD, LADHEAR, IKQLRID, VDDHESR, ITANTKA, ITALNVR, VTTAEGE, IASLQTN, VSALDGR, VTTAENN, and ISALQAD. Residues 61–139 adopt a coiled-coil conformation; sequence VKNDEQDVEL…ENNISALQAD (79 aa). Positions 175–233 are inverted coiled coil; it reads GWTAATGTANKGVFDADLTFAVSDTYTQSEIQAIANALITERRRTKALEDALRAHGLID. The Basic cluster motif lies at 216-220; that stretch reads RRRTK.

Belongs to the Lederbergvirus tail needle protein family. As to quaternary structure, homotrimer. The trimer forms an elongated coiled-coil (240A x 25A). The N-terminal tip may exist in a pre-ejection extended conformation, which may fold into a trimer of hairpins only after ejection into the host. Interacts (via N-terminus) with the tail hub gp10. Interacts with the head-to-tail adapter protein gp4.

It is found in the virion. Its function is as follows. Cell-perforating component and plug protein of the phage tail machine. Together with gp4 and gp10, gp26 is required for stabilization of the condensed DNA within the capsid by plugging the hole through which the DNA enters. Host cell membrane perforation allows viral DNA ejection. The needle penetrates the host outer membrane. The needle is released and the internal head protein gp7 is ejected to form an extra-cellular channel. The protein is Tail needle protein gp26 (26) of Salmonella typhimurium (Bacteriophage P22).